The primary structure comprises 660 residues: MGRIRILPDQVANKIAAGEVVERPASVVKELLENSLDAGATEVRVEVEAGGRRLIRIVDDGFGMLRDDALLAFERHATSKLRDVKDLLSIATLGFRGEALPSIASVSRLLLETRSMEEPTGTRIEIAGGKMLRCEEAALGGGTVITVRDLFYNVPARRKFLRTEPTELAHIASLVTHYSLAHPDKSFRLSTGPTELLGVTPVASMKERVYQVFGSQILDELVEIGVRERDLFLPPPSVPPSQAIAEYRSTEPEDPPFRRFRLTGFFSRPQIQKSNRNSIYIFVNGRLIRDRLVLHALSSAYHNLMPASAYPFALLFLECDAEEVDVNVHPSKTEVRFRHGSFLHDFIRDSIRERLMESRPAPTFSPVPMAAPPAQQGAQLPYSEFSQMLENEQQAASEMAEPAIAGEPAMPEFNLRATAPPTPRLDFSAPPIEVAPGPPPSGKLSRRLDMHGEFPLEAIPAPEMSLSALSDLRPLGQIHESFIIAAGRDGLWIIDQHVAHERILFEQVLKQRAAGRVETQRLLMPMILQLSAEQQIDYARIADELHASGFETEPFGNRTIAVKAAPAAVGPQDLERILFEILEIAENEMRTNSLDDLRRNICASIACRAAIKINMRLDLAKMEWLLRALAATDCPMSCPHGRPIAMHYSTREILKAFHRI.

The protein belongs to the DNA mismatch repair MutL/HexB family.

This protein is involved in the repair of mismatches in DNA. It is required for dam-dependent methyl-directed DNA mismatch repair. May act as a 'molecular matchmaker', a protein that promotes the formation of a stable complex between two or more DNA-binding proteins in an ATP-dependent manner without itself being part of a final effector complex. The protein is DNA mismatch repair protein MutL of Solibacter usitatus (strain Ellin6076).